A 197-amino-acid polypeptide reads, in one-letter code: GTP cyclohydrolase-2 (197 aa).

49–53 contributes to the GTP binding site; sequence RVHSE. Zn(2+) is bound by residues C54, C65, and C67. Residues Q70, 92–94, and T114 contribute to the GTP site; that span reads EGR. The active-site Proton acceptor is D126. Residue R128 is the Nucleophile of the active site. Residues T149 and K154 each coordinate GTP.

The protein belongs to the GTP cyclohydrolase II family. In terms of assembly, homodimer. Requires Zn(2+) as cofactor.

The catalysed reaction is GTP + 4 H2O = 2,5-diamino-6-hydroxy-4-(5-phosphoribosylamino)-pyrimidine + formate + 2 phosphate + 3 H(+). It participates in cofactor biosynthesis; riboflavin biosynthesis; 5-amino-6-(D-ribitylamino)uracil from GTP: step 1/4. Its function is as follows. Catalyzes the conversion of GTP to 2,5-diamino-6-ribosylamino-4(3H)-pyrimidinone 5'-phosphate (DARP), formate and pyrophosphate. This is GTP cyclohydrolase-2 from Pectobacterium atrosepticum (strain SCRI 1043 / ATCC BAA-672) (Erwinia carotovora subsp. atroseptica).